The chain runs to 287 residues: Homoserine kinase (287 aa).

79–89 (PLARGLGSSSS) lines the ATP pocket.

This sequence belongs to the GHMP kinase family. Homoserine kinase subfamily.

The protein localises to the cytoplasm. The enzyme catalyses L-homoserine + ATP = O-phospho-L-homoserine + ADP + H(+). It functions in the pathway amino-acid biosynthesis; L-threonine biosynthesis; L-threonine from L-aspartate: step 4/5. In terms of biological role, catalyzes the ATP-dependent phosphorylation of L-homoserine to L-homoserine phosphate. This chain is Homoserine kinase, found in Enterococcus faecalis (strain ATCC 700802 / V583).